The following is a 324-amino-acid chain: Integrin-binding sialoprotein (324 aa).

A signal peptide spans 1 to 16 (MKTALILLSILGMACA). A phosphoserine mark is found at Ser-31, Ser-67, Ser-75, Ser-76, and Ser-95. 2 disordered regions span residues 60 to 228 (VQGG…GREL) and 243 to 263 (QQTTPPPEAYGTTSPPIRKSS). The span at 66 to 105 (SSEENGDGDSSEEEGEEEETSNEEENNEDSEGNEDQEAEA) shows a compositional bias: acidic residues. Polar residues predominate over residues 106–130 (ENSTLSTLSGVTASYGAETTPQAQT). A glycan (N-linked (GlcNAc...) asparagine) is linked at Asn-107. The segment covering 141-154 (KAGDAESRAPKVKE) has biased composition (basic and acidic residues). Ser-155 carries the post-translational modification Phosphoserine. Acidic residues predominate over residues 155-179 (SDEEEEEEEEEEENENEEAEVDENE). N-linked (GlcNAc...) asparagine glycans are attached at residues Asn-183, Asn-188, and Asn-196. The span at 203–213 (NGEEAEAEEAS) shows a compositional bias: acidic residues. Residues 253-263 (GTTSPPIRKSS) show a composition bias toward polar residues. The Integrin-binding motif motif lies at 293–295 (RGD). Sulfotyrosine occurs at positions 320 and 321.

As to quaternary structure, monomer. Interacts with integrins; the interaction promotes cell adhesion.

It localises to the secreted. In terms of biological role, binds tightly to hydroxyapatite. Appears to form an integral part of the mineralized matrix. Probably important to cell-matrix interaction. Promotes adhesion and migration of various cells via the alpha-V/beta-3 integrin receptor (ITGAV:ITGB3). This is Integrin-binding sialoprotein (Ibsp) from Mus musculus (Mouse).